We begin with the raw amino-acid sequence, 445 residues long: Serine/threonine-protein kinase Nek2 (445 aa).

Positions 8–271 constitute a Protein kinase domain; that stretch reads YEVLYTIGTG…VEEILENPLI (264 aa). Residues 14–22 and Lys-37 each bind ATP; that span reads IGTGSYGRC. Residue Asp-141 is the Proton acceptor of the active site. Thr-170 carries the phosphothreonine; by autocatalysis modification. Phosphoserine; by autocatalysis is present on Ser-171. Phosphothreonine; by autocatalysis is present on residues Thr-175 and Thr-179. Ser-184 is modified (phosphoserine). The residue at position 241 (Ser-241) is a Phosphoserine; by autocatalysis. The interaction with PCNT stretch occupies residues 264–445; that stretch reads EILENPLIAD…LKSRQILGMR (182 aa). Phosphoserine is present on residues Ser-296 and Ser-300. The interval 301–445 is interaction with CEP85; sequence PVLSELKLKE…LKSRQILGMR (145 aa). The stretch at 303-362 forms a coiled coil; that stretch reads LSELKLKEIQLQERERALKAREERLEQKEQELCVRERLAEDKLARAENLLKNYSLLKERK. Positions 306–334 are leucine-zipper; it reads LKLKEIQLQERERALKAREERLEQKEQEL. The interval 329 to 445 is necessary for interaction with MAD1L1; it reads QKEQELCVRE…LKSRQILGMR (117 aa). The interval 333 to 370 is required for microtubule binding and for localization to the centrosomes; the sequence is ELCVRERLAEDKLARAENLLKNYSLLKERKFLSLASNP. Residues Ser-356 and Ser-365 each carry the phosphoserine; by STK3/MST2 modification. Residues Ser-387, Ser-390, Ser-397, and Ser-402 each carry the phosphoserine modification. The interaction with SAV1 and STK3/MST2 stretch occupies residues 403–439; the sequence is QLTSKSKCKDLKKRLHAAQLRAQALSDIEKNYQLKSR. Phosphoserine; by STK3/MST2 is present on Ser-406. Residues 406–430 adopt a coiled-coil conformation; the sequence is SKSKCKDLKKRLHAAQLRAQALSDI. Phosphoserine is present on Ser-428. A Phosphoserine; by STK3/MST2 modification is found at Ser-438.

It belongs to the protein kinase superfamily. NEK Ser/Thr protein kinase family. NIMA subfamily. As to quaternary structure, isoform 1, isoform 2 and isoform 4 form homo- and heterodimers. Interacts with NECAB3 and HMGA2. Isoform 1 interacts with CDC20, CTNB1, MAD1L1, MAPK, NEK11, NPM1, NDC80, PCNT and SGO1. Isoform 1 interacts with STK3/MST2 (via SARAH domain) and SAV1 (via SARAH domain). Isoform 1 and isoform 2 interact with MAD2L1. Isoform 1 and isoform 4 interact with PPP1CA and PPP1CC. Interacts with CEP68; the interaction leads to phosphorylation of CEP68. Interacts with CNTLN; the interaction leads to phosphorylation of CNTLN. Isoform 1 interacts with CEP85. Interacts with CCDC102B; the interaction leads to phosphorylation of CCDC102B. The cofactor is Mg(2+). Post-translationally, activated by autophosphorylation. Protein phosphatase 1 represses autophosphorylation and activation of isoform 1 by dephosphorylation. Phosphorylation by STK3/MST2 is necessary for its localization to the centrosome. As to expression, isoform 1 and isoform 2 are expressed in peripheral blood T-cells and a wide variety of transformed cell types. Isoform 1 and isoform 4 are expressed in the testis. Up-regulated in various cancer cell lines, as well as primary breast tumors.

It is found in the nucleus. Its subcellular location is the nucleolus. The protein resides in the cytoplasm. It localises to the cytoskeleton. The protein localises to the microtubule organizing center. It is found in the centrosome. Its subcellular location is the spindle pole. The protein resides in the chromosome. It localises to the centromere. The protein localises to the kinetochore. It catalyses the reaction L-seryl-[protein] + ATP = O-phospho-L-seryl-[protein] + ADP + H(+). It carries out the reaction L-threonyl-[protein] + ATP = O-phospho-L-threonyl-[protein] + ADP + H(+). Isoform 1 is inhibited by ionizing radiation in the presence of PPP1CA. Its catalytic activity is inhibited by the inhibitor CCT241950. In the presence of this inhibitor, displays an autoinhibited conformation: Tyr-70 side chain points into the active site, interacts with the activation loop, and blocks the alphaC helix. In terms of biological role, protein kinase which is involved in the control of centrosome separation and bipolar spindle formation in mitotic cells and chromatin condensation in meiotic cells. Regulates centrosome separation (essential for the formation of bipolar spindles and high-fidelity chromosome separation) by phosphorylating centrosomal proteins such as CROCC, CEP250 and NINL, resulting in their displacement from the centrosomes. Regulates kinetochore microtubule attachment stability in mitosis via phosphorylation of NDC80. Involved in regulation of mitotic checkpoint protein complex via phosphorylation of CDC20 and MAD2L1. Plays an active role in chromatin condensation during the first meiotic division through phosphorylation of HMGA2. Phosphorylates: PPP1CC; SGO1; NECAB3 and NPM1. Essential for localization of MAD2L1 to kinetochore and MAPK1 and NPM1 to the centrosome. Phosphorylates CEP68 and CNTLN directly or indirectly. NEK2-mediated phosphorylation of CEP68 promotes CEP68 dissociation from the centrosome and its degradation at the onset of mitosis. Involved in the regulation of centrosome disjunction. Phosphorylates CCDC102B either directly or indirectly which causes CCDC102B to dissociate from the centrosome and allows for centrosome separation. Its function is as follows. Phosphorylates and activates NEK11 in G1/S-arrested cells. Not present in the nucleolus and, in contrast to isoform 1, does not phosphorylate and activate NEK11 in G1/S-arrested cells. The polypeptide is Serine/threonine-protein kinase Nek2 (NEK2) (Homo sapiens (Human)).